The primary structure comprises 160 residues: SsrA-binding protein (160 aa).

The protein belongs to the SmpB family.

Its subcellular location is the cytoplasm. Required for rescue of stalled ribosomes mediated by trans-translation. Binds to transfer-messenger RNA (tmRNA), required for stable association of tmRNA with ribosomes. tmRNA and SmpB together mimic tRNA shape, replacing the anticodon stem-loop with SmpB. tmRNA is encoded by the ssrA gene; the 2 termini fold to resemble tRNA(Ala) and it encodes a 'tag peptide', a short internal open reading frame. During trans-translation Ala-aminoacylated tmRNA acts like a tRNA, entering the A-site of stalled ribosomes, displacing the stalled mRNA. The ribosome then switches to translate the ORF on the tmRNA; the nascent peptide is terminated with the 'tag peptide' encoded by the tmRNA and targeted for degradation. The ribosome is freed to recommence translation, which seems to be the essential function of trans-translation. The protein is SsrA-binding protein of Nocardia farcinica (strain IFM 10152).